Here is a 363-residue protein sequence, read N- to C-terminus: Phosphoserine aminotransferase (363 aa).

Position 42 (R42) interacts with L-glutamate. Residues 76-77 (GR), W102, T156, D175, and Q198 each bind pyridoxal 5'-phosphate. Position 199 is an N6-(pyridoxal phosphate)lysine (K199). 240–241 (NT) is a pyridoxal 5'-phosphate binding site.

The protein belongs to the class-V pyridoxal-phosphate-dependent aminotransferase family. SerC subfamily. In terms of assembly, homodimer. Pyridoxal 5'-phosphate is required as a cofactor.

Its subcellular location is the cytoplasm. It catalyses the reaction O-phospho-L-serine + 2-oxoglutarate = 3-phosphooxypyruvate + L-glutamate. The enzyme catalyses 4-(phosphooxy)-L-threonine + 2-oxoglutarate = (R)-3-hydroxy-2-oxo-4-phosphooxybutanoate + L-glutamate. The protein operates within amino-acid biosynthesis; L-serine biosynthesis; L-serine from 3-phospho-D-glycerate: step 2/3. It participates in cofactor biosynthesis; pyridoxine 5'-phosphate biosynthesis; pyridoxine 5'-phosphate from D-erythrose 4-phosphate: step 3/5. In terms of biological role, catalyzes the reversible conversion of 3-phosphohydroxypyruvate to phosphoserine and of 3-hydroxy-2-oxo-4-phosphonooxybutanoate to phosphohydroxythreonine. This chain is Phosphoserine aminotransferase, found in Shewanella baltica (strain OS223).